The following is a 115-amino-acid chain: NADH-ubiquinone oxidoreductase chain 3 (115 aa).

A run of 3 helical transmembrane segments spans residues 3-23 (LMLALLTNFTLATLLVIIAFW), 55-75 (FFLVAITFLLFDLEIALLLPL), and 84-104 (LNTMLTMALFLIILLAVSLAY).

Belongs to the complex I subunit 3 family. As to quaternary structure, core subunit of respiratory chain NADH dehydrogenase (Complex I) which is composed of 45 different subunits. Interacts with TMEM186. Interacts with TMEM242.

It localises to the mitochondrion inner membrane. The catalysed reaction is a ubiquinone + NADH + 5 H(+)(in) = a ubiquinol + NAD(+) + 4 H(+)(out). Core subunit of the mitochondrial membrane respiratory chain NADH dehydrogenase (Complex I) which catalyzes electron transfer from NADH through the respiratory chain, using ubiquinone as an electron acceptor. Essential for the catalytic activity of complex I. The protein is NADH-ubiquinone oxidoreductase chain 3 of Bos indicus (Zebu).